Consider the following 1019-residue polypeptide: Photoactivated adenylate cyclase subunit alpha-like protein ST- (1019 aa).

Positions 55-148 (LRRLMYLSAS…GRMYGEWHMK (94 aa)) constitute a BLUF 1 domain. The 129-residue stretch at 204 to 332 (VLTFIYLVEF…DCINTASRIT (129 aa)) folds into the Guanylate cyclase 1 domain. The region spanning 467 to 559 (LITLTYISQA…RVYGTPLDMT (93 aa)) is the BLUF 2 domain. Residues 615 to 744 (VMLATDICSF…EVSARVMAVE (130 aa)) form the Guanylate cyclase 2 domain. Disordered stretches follow at residues 801–846 (EDHL…TRPH), 887–923 (QIAA…DQPA), and 963–993 (EGHR…NRAT). Over residues 821-834 (RHQRPGPGRPRRGH) the composition is skewed to basic residues.

It belongs to the adenylyl cyclase class-4/guanylyl cyclase family. Heterotetramer of two alpha and two beta subunits.

The protein resides in the cell projection. Its subcellular location is the cilium. It is found in the flagellum. The chain is Photoactivated adenylate cyclase subunit alpha-like protein ST- from Euglena gracilis.